The sequence spans 183 residues: MTKQPEDWLDDVPGDDIEDEDDEIIWVSKSEIKRDAEELKRLGAEIVDLGKNALDKIPLDADLRAAIELAQRIKMEGRRRQLQLIGKMLRQRDVEPIRQALDKLKNRHNQQVVLFHKLEQLRDRLIVEGDDAVEEVLSLWPNADRQQLRSLIRNAKKEKEGNKPPKSARQIFQYLRELAENEE.

This sequence belongs to the DarP family.

The protein resides in the cytoplasm. Its function is as follows. Member of a network of 50S ribosomal subunit biogenesis factors which assembles along the 30S-50S interface, preventing incorrect 23S rRNA structures from forming. Promotes peptidyl transferase center (PTC) maturation. The sequence is that of Dual-action ribosomal maturation protein DarP from Citrobacter koseri (strain ATCC BAA-895 / CDC 4225-83 / SGSC4696).